Consider the following 348-residue polypeptide: Protein RecA (348 aa).

65–72 (GPESSGKT) contributes to the ATP binding site. Residues 326-348 (QMGSESLSSSSDDDDIKEESGEE) are disordered. Over residues 336-348 (SDDDDIKEESGEE) the composition is skewed to acidic residues.

This sequence belongs to the RecA family.

It localises to the cytoplasm. Can catalyze the hydrolysis of ATP in the presence of single-stranded DNA, the ATP-dependent uptake of single-stranded DNA by duplex DNA, and the ATP-dependent hybridization of homologous single-stranded DNAs. It interacts with LexA causing its activation and leading to its autocatalytic cleavage. The chain is Protein RecA from Campylobacter hominis (strain ATCC BAA-381 / DSM 21671 / CCUG 45161 / LMG 19568 / NCTC 13146 / CH001A).